The primary structure comprises 467 residues: Ankyrin repeat and SOCS box protein 10 (467 aa).

ANK repeat units follow at residues 115–144, 147–176, 180–209, 214–243, 247–289, 293–322, and 326–361; these read ELTT…RPDS, GGRT…DPNI, DGKR…RVDG, EEET…CPDA, EGWT…DADA, DKQR…SANT, and GGHT…AVRV. An SOCS box domain is found at 412-464; the sequence is YSSLFALVRQPRSLQHLSRCALRSHLEGSLPQALPRLPLPPRLLRYLQLDFEG.

The protein belongs to the ankyrin SOCS box (ASB) family. As to expression, expressed in the eye. The highest expression is observed in the iris, with moderate levels in the trabecular meshwork (TM), the lamina, and the optic nerve; slightly lower levels in the ciliary body, retina, and choroid; and very low levels in the lens.

The protein resides in the cytoplasm. It is found in the nucleus. The protein operates within protein modification; protein ubiquitination. In terms of biological role, may be a substrate-recognition component of a SCF-like ECS (Elongin-Cullin-SOCS-box protein) E3 ubiquitin-protein ligase complex which mediates the ubiquitination and subsequent proteasomal degradation of target proteins. The polypeptide is Ankyrin repeat and SOCS box protein 10 (ASB10) (Homo sapiens (Human)).